Consider the following 176-residue polypeptide: uncharacterized protein (176 aa).

This is an uncharacterized protein from Aquifex aeolicus (strain VF5).